The chain runs to 410 residues: Lipoyl synthase, mitochondrial (410 aa).

[4Fe-4S] cluster-binding residues include C134, C139, C145, C165, C169, C172, and S390. In terms of domain architecture, Radical SAM core spans 148–379 (AGKSTAATAT…AKIGNDLGFL (232 aa)).

This sequence belongs to the radical SAM superfamily. Lipoyl synthase family. [4Fe-4S] cluster is required as a cofactor.

It localises to the mitochondrion. The enzyme catalyses [[Fe-S] cluster scaffold protein carrying a second [4Fe-4S](2+) cluster] + N(6)-octanoyl-L-lysyl-[protein] + 2 oxidized [2Fe-2S]-[ferredoxin] + 2 S-adenosyl-L-methionine + 4 H(+) = [[Fe-S] cluster scaffold protein] + N(6)-[(R)-dihydrolipoyl]-L-lysyl-[protein] + 4 Fe(3+) + 2 hydrogen sulfide + 2 5'-deoxyadenosine + 2 L-methionine + 2 reduced [2Fe-2S]-[ferredoxin]. It participates in protein modification; protein lipoylation via endogenous pathway; protein N(6)-(lipoyl)lysine from octanoyl-[acyl-carrier-protein]: step 2/2. Catalyzes the radical-mediated insertion of two sulfur atoms into the C-6 and C-8 positions of the octanoyl moiety bound to the lipoyl domains of lipoate-dependent enzymes, thereby converting the octanoylated domains into lipoylated derivatives. The protein is Lipoyl synthase, mitochondrial of Schistosoma mansoni (Blood fluke).